The sequence spans 154 residues: Ribosome maturation factor RimP (154 aa).

The protein belongs to the RimP family.

The protein localises to the cytoplasm. In terms of biological role, required for maturation of 30S ribosomal subunits. The sequence is that of Ribosome maturation factor RimP from Carboxydothermus hydrogenoformans (strain ATCC BAA-161 / DSM 6008 / Z-2901).